The sequence spans 96 residues: Methanol dehydrogenase [cytochrome c] subunit 2 (96 aa).

Residues 1–22 (MKTTLIAAAIVALSGLAAPALA) form the signal peptide. The cysteines at positions 28 and 34 are disulfide-linked. The segment at 45–75 (IAGSKYDPKHDPKELNKQADSIKQMEERNKK) is disordered. Positions 50 to 61 (YDPKHDPKELNK) are enriched in basic and acidic residues.

The protein belongs to the methanol dehydrogenase subunit 2 family. Heterotetramer composed of 2 alpha and 2 beta subunits.

The protein localises to the periplasm. The enzyme catalyses 2 Fe(III)-[cytochrome cL] + a primary alcohol = 2 Fe(II)-[cytochrome cL] + an aldehyde + 2 H(+). Catalyzes the oxidation of primary alcohols including methanol. The polypeptide is Methanol dehydrogenase [cytochrome c] subunit 2 (moxI) (Methylorubrum extorquens (strain ATCC 14718 / DSM 1338 / JCM 2805 / NCIMB 9133 / AM1) (Methylobacterium extorquens)).